The sequence spans 188 residues: Putative pre-16S rRNA nuclease (188 aa).

The segment at 156-188 (LRQGDAAPGGSDDERDEDGDTDGEDGGGDGGGE) is disordered. The segment covering 166–188 (SDDERDEDGDTDGEDGGGDGGGE) has biased composition (acidic residues).

Belongs to the YqgF nuclease family.

The protein resides in the cytoplasm. Its function is as follows. Could be a nuclease involved in processing of the 5'-end of pre-16S rRNA. This is Putative pre-16S rRNA nuclease from Rhodospirillum centenum (strain ATCC 51521 / SW).